We begin with the raw amino-acid sequence, 716 residues long: Zinc finger CCCH domain-containing protein 30 (716 aa).

2 ANK repeats span residues 90-120 (DYRTPLMVAATYGSIDVIKLIVSLTDADVNR) and 125-157 (DQTTALHCAASGGAVNAIQVVKLLLAAGADLNL). The interval 201-231 (VTNVPNRSSSPCHSPTGENGGSGSGSPLGSP) is disordered. Over residues 203–213 (NVPNRSSSPCH) the composition is skewed to polar residues. 2 C3H1-type zinc fingers span residues 306–328 (PCPDFRKGACRRGDMCEYAHGVF) and 336–360 (QYRTRLCKDGTGCARRVCFFAHTPE). A disordered region spans residues 521–562 (FQQQQQQQQSMLSPINTSFSSPKSVDHSLFSGGGRMSPRNVV). Over residues 530 to 543 (SMLSPINTSFSSPK) the composition is skewed to polar residues. Residue S566 is modified to Phosphoserine. Low complexity predominate over residues 583–594 (QQQQQQQQQQHQ). 2 disordered regions span residues 583-638 (QQQQ…MSSE) and 667-692 (PAEAKEKAATSSSGEHVMKQPNPVEP). The span at 605–630 (TNSSPIVGSPVNNNTWSSKWGSSNGQ) shows a compositional bias: polar residues.

The sequence is that of Zinc finger CCCH domain-containing protein 30 from Arabidopsis thaliana (Mouse-ear cress).